The sequence spans 137 residues: uncharacterized protein (137 aa).

This is an uncharacterized protein from Saccharomyces cerevisiae (strain ATCC 204508 / S288c) (Baker's yeast).